Consider the following 209-residue polypeptide: Eukaryotic translation initiation factor isoform 4E-2 (209 aa).

The segment at 1 to 29 (MAEVEAALPVAATETPEVAAEGDAGAAEA) is disordered. The span at 9–29 (PVAATETPEVAAEGDAGAAEA) shows a compositional bias: low complexity. MRNA-binding positions include 51-56 (PGAAWG), Lys83, and 101-102 (WE). A disulfide bridge links Cys106 with Cys145. MRNA is bound by residues 152 to 157 (RQRQDK) and 197 to 200 (RSQK).

This sequence belongs to the eukaryotic initiation factor 4E family. In terms of assembly, EIF4F is a multi-subunit complex, the composition of which varies with external and internal environmental conditions. It is composed of at least EIF4A, EIF4E and EIF4G. EIF4E is also known to interact with other partners. In higher plants two isoforms of EIF4F have been identified, named isoform EIF4F and isoform EIF(iso)4F. Isoform EIF4F has subunits p220 and p26, whereas isoform EIF(iso)4F has subunits p82 and p28. According to the redox status, the Cys-106-Cys-145 disulfide bridge may have a role in regulating protein function by affecting its ability to bind capped mRNA.

It localises to the cytoplasm. The protein localises to the nucleus. Component of the protein complex eIF4F, which is involved in the recognition of the mRNA cap, ATP-dependent unwinding of 5'-terminal secondary structure and recruitment of mRNA to the ribosome. Recognizes and binds the 7-methylguanosine-containing mRNA cap during an early step in the initiation of protein synthesis and facilitates ribosome binding by inducing the unwinding of the mRNAs secondary structures. The sequence is that of Eukaryotic translation initiation factor isoform 4E-2 from Triticum aestivum (Wheat).